Reading from the N-terminus, the 952-residue chain is Isoleucine--tRNA ligase (952 aa).

The 'HIGH' region motif lies at 58-68; the sequence is PYANGDIHIGH. L-isoleucyl-5'-AMP is bound at residue glutamate 576. A 'KMSKS' region motif is present at residues 617–621; the sequence is KMSKS. Lysine 620 is a binding site for ATP. 4 residues coordinate Zn(2+): cysteine 915, cysteine 918, cysteine 935, and cysteine 938.

It belongs to the class-I aminoacyl-tRNA synthetase family. IleS type 1 subfamily. Monomer. Zn(2+) serves as cofactor.

It localises to the cytoplasm. It carries out the reaction tRNA(Ile) + L-isoleucine + ATP = L-isoleucyl-tRNA(Ile) + AMP + diphosphate. Functionally, catalyzes the attachment of isoleucine to tRNA(Ile). As IleRS can inadvertently accommodate and process structurally similar amino acids such as valine, to avoid such errors it has two additional distinct tRNA(Ile)-dependent editing activities. One activity is designated as 'pretransfer' editing and involves the hydrolysis of activated Val-AMP. The other activity is designated 'posttransfer' editing and involves deacylation of mischarged Val-tRNA(Ile). This Aliivibrio fischeri (strain ATCC 700601 / ES114) (Vibrio fischeri) protein is Isoleucine--tRNA ligase.